The primary structure comprises 332 residues: CRISPR-associated endonuclease Cas1 3 (332 aa).

E159, H224, and E239 together coordinate Mn(2+).

This sequence belongs to the CRISPR-associated endonuclease Cas1 family. As to quaternary structure, homodimer, forms a heterotetramer with a Cas2 homodimer. The cofactor is Mg(2+). It depends on Mn(2+) as a cofactor.

In terms of biological role, CRISPR (clustered regularly interspaced short palindromic repeat), is an adaptive immune system that provides protection against mobile genetic elements (viruses, transposable elements and conjugative plasmids). CRISPR clusters contain spacers, sequences complementary to antecedent mobile elements, and target invading nucleic acids. CRISPR clusters are transcribed and processed into CRISPR RNA (crRNA). Acts as a dsDNA endonuclease. Involved in the integration of spacer DNA into the CRISPR cassette. This chain is CRISPR-associated endonuclease Cas1 3, found in Thermus thermophilus (strain ATCC 27634 / DSM 579 / HB8).